Here is a 346-residue protein sequence, read N- to C-terminus: fMet-Leu-Phe receptor (346 aa).

N-linked (GlcNAc...) asparagine glycans are attached at residues N1 and N7. Over N1 to I24 the chain is Extracellular. A helical membrane pass occupies residues I25–V47. The Cytoplasmic portion of the chain corresponds to A48–T58. Residues I59–V80 traverse the membrane as a helical segment. The Extracellular segment spans residues R81–F97. Residues C95 and C173 are joined by a disulfide bond. Residues I98–L118 traverse the membrane as a helical segment. Topologically, residues D119–S137 are cytoplasmic. A helical transmembrane segment spans residues L138–I159. Over R160 to R202 the chain is Extracellular. A helical transmembrane segment spans residues F203 to T223. The Cytoplasmic portion of the chain corresponds to K224 to V239. Residues L240–V263 form a helical membrane-spanning segment. The Extracellular portion of the chain corresponds to R264 to V282. A helical membrane pass occupies residues T283–G302. At Q303–A346 the chain is on the cytoplasmic side. The span at A324–P338 shows a compositional bias: polar residues. Residues A324 to A346 form a disordered region.

This sequence belongs to the G-protein coupled receptor 1 family. In terms of processing, phosphorylated; which is necessary for desensitization.

The protein resides in the cell membrane. In terms of biological role, high affinity receptor for N-formyl-methionyl peptides (fMLP), which are powerful neutrophil chemotactic factors. Binding of fMLP to the receptor stimulates intracellular calcium mobilization and superoxide anion release. This response is mediated via a G-protein that activates a phosphatidylinositol-calcium second messenger system. Receptor for TAFA4, mediates its effects on chemoattracting macrophages, promoting phagocytosis and increasing ROS release. Receptor for cathepsin CTSG, leading to increased phagocyte chemotaxis. This Pongo pygmaeus (Bornean orangutan) protein is fMet-Leu-Phe receptor (FPR1).